A 202-amino-acid polypeptide reads, in one-letter code: V-type proton ATPase subunit E (202 aa).

It belongs to the V-ATPase E subunit family.

In terms of biological role, produces ATP from ADP in the presence of a proton gradient across the membrane. The protein is V-type proton ATPase subunit E of Halothermothrix orenii (strain H 168 / OCM 544 / DSM 9562).